Consider the following 77-residue polypeptide: Acyl carrier protein (77 aa).

A Carrier domain is found at serine 2 to serine 77. The residue at position 37 (serine 37) is an O-(pantetheine 4'-phosphoryl)serine.

The protein belongs to the acyl carrier protein (ACP) family. In terms of processing, 4'-phosphopantetheine is transferred from CoA to a specific serine of apo-ACP by AcpS. This modification is essential for activity because fatty acids are bound in thioester linkage to the sulfhydryl of the prosthetic group.

Its subcellular location is the cytoplasm. The protein operates within lipid metabolism; fatty acid biosynthesis. Its function is as follows. Carrier of the growing fatty acid chain in fatty acid biosynthesis. In Roseobacter denitrificans (strain ATCC 33942 / OCh 114) (Erythrobacter sp. (strain OCh 114)), this protein is Acyl carrier protein.